A 512-amino-acid chain; its full sequence is Cytochrome P450 monooxygenase gliC (512 aa).

Positions 1 to 19 (MAFTLTILVPCMVLALVAA) are cleaved as a signal peptide. 3 N-linked (GlcNAc...) asparagine glycosylation sites follow: N118, N421, and N434. C452 is a binding site for heme.

It belongs to the cytochrome P450 family. The cofactor is heme.

Its pathway is mycotoxin biosynthesis. Functionally, cytochrome P450 monooxygenase; part of the gene cluster that mediates the biosynthesis of gliotoxin, a member of the epipolythiodioxopiperazine (ETP) class of toxins characterized by a disulfide bridged cyclic dipeptide. The first step in gliotoxin biosynthesis is the condensation of serine and phenylalanine to form the cyclo-L-phenylalanyl-L-serine diketopiperazine (DKP) by the NRPS gliP. GliP is also able to produce the DKP cyclo-L-tryptophanyl-L-serine, suggesting that the substrate specificity of the first adenylation (A) domain in gliP is sufficiently relaxed to accommodate both L-Phe and L-Trp. The cytochrome P450 monooxygenase gliC has been shown to catalyze the subsequent hydroxylation of the alpha-carbon of L-Phe in cyclo-L-phenylalanyl-L-serine whereas the second cytochrome P450 enzyme, gliF, is presumably involved in the modification of the DKP side chain. The glutathione S-transferase (GST) gliG then forms a bis-glutathionylated biosynthetic intermediate which is responsible for the sulfurization of gliotoxin. This bis-glutathionylated intermediate is subsequently processed by the gamma-glutamyl cyclotransferase gliK to remove both gamma-glutamyl moieties. Subsequent processing via gliI yields a biosynthetic intermediate, which is N-methylated via the N-methyltransferase gliN, before the gliotoxin oxidoreductase gliT-mediated disulfide bridge closure. GliN-mediated amide methylation confers stability to ETP, damping the spontaneous formation of tri- and tetrasulfides. Intracellular dithiol gliotoxin oxidized by gliT is subsequently effluxed by gliA. Gliotoxin contributes to pathogenesis during invasive aspergillosis. In macrophages and neutrophils, gliotoxin showed inhibition of various different cell functions including cytokine production, antigen presentation, phagocytosis, and production of reactive oxygen species. The chain is Cytochrome P450 monooxygenase gliC from Aspergillus fumigatus (strain ATCC MYA-4609 / CBS 101355 / FGSC A1100 / Af293) (Neosartorya fumigata).